The following is a 549-amino-acid chain: Chaperonin GroEL (549 aa).

ATP-binding positions include 30-33, lysine 51, 87-91, glycine 415, and aspartate 495; these read TLGP and DGTTT.

It belongs to the chaperonin (HSP60) family. As to quaternary structure, forms a cylinder of 14 subunits composed of two heptameric rings stacked back-to-back. Interacts with the co-chaperonin GroES.

It localises to the cytoplasm. The catalysed reaction is ATP + H2O + a folded polypeptide = ADP + phosphate + an unfolded polypeptide.. Functionally, together with its co-chaperonin GroES, plays an essential role in assisting protein folding. The GroEL-GroES system forms a nano-cage that allows encapsulation of the non-native substrate proteins and provides a physical environment optimized to promote and accelerate protein folding. The protein is Chaperonin GroEL of Hahella chejuensis (strain KCTC 2396).